The primary structure comprises 255 residues: Aspartate/glutamate leucyltransferase (255 aa).

This sequence belongs to the R-transferase family. Bpt subfamily.

The protein localises to the cytoplasm. It carries out the reaction N-terminal L-glutamyl-[protein] + L-leucyl-tRNA(Leu) = N-terminal L-leucyl-L-glutamyl-[protein] + tRNA(Leu) + H(+). The enzyme catalyses N-terminal L-aspartyl-[protein] + L-leucyl-tRNA(Leu) = N-terminal L-leucyl-L-aspartyl-[protein] + tRNA(Leu) + H(+). Its function is as follows. Functions in the N-end rule pathway of protein degradation where it conjugates Leu from its aminoacyl-tRNA to the N-termini of proteins containing an N-terminal aspartate or glutamate. The polypeptide is Aspartate/glutamate leucyltransferase (Leptospira borgpetersenii serovar Hardjo-bovis (strain JB197)).